The chain runs to 405 residues: Arginine biosynthesis bifunctional protein ArgJ (405 aa).

Substrate contacts are provided by Thr152, Lys178, Thr189, Glu276, Asn400, and Thr405. Residue Thr189 is the Nucleophile of the active site.

The protein belongs to the ArgJ family. As to quaternary structure, heterotetramer of two alpha and two beta chains.

The protein localises to the cytoplasm. The enzyme catalyses N(2)-acetyl-L-ornithine + L-glutamate = N-acetyl-L-glutamate + L-ornithine. It carries out the reaction L-glutamate + acetyl-CoA = N-acetyl-L-glutamate + CoA + H(+). Its pathway is amino-acid biosynthesis; L-arginine biosynthesis; L-ornithine and N-acetyl-L-glutamate from L-glutamate and N(2)-acetyl-L-ornithine (cyclic): step 1/1. It functions in the pathway amino-acid biosynthesis; L-arginine biosynthesis; N(2)-acetyl-L-ornithine from L-glutamate: step 1/4. Its function is as follows. Catalyzes two activities which are involved in the cyclic version of arginine biosynthesis: the synthesis of N-acetylglutamate from glutamate and acetyl-CoA as the acetyl donor, and of ornithine by transacetylation between N(2)-acetylornithine and glutamate. The polypeptide is Arginine biosynthesis bifunctional protein ArgJ (Pseudomonas syringae pv. tomato (strain ATCC BAA-871 / DC3000)).